The following is a 307-amino-acid chain: tRNA dimethylallyltransferase (307 aa).

9–16 (GPTAVGKT) lines the ATP pocket. 11–16 (TAVGKT) contributes to the substrate binding site. The tract at residues 34–37 (DSMQ) is interaction with substrate tRNA.

Belongs to the IPP transferase family. Monomer. Requires Mg(2+) as cofactor.

The enzyme catalyses adenosine(37) in tRNA + dimethylallyl diphosphate = N(6)-dimethylallyladenosine(37) in tRNA + diphosphate. Catalyzes the transfer of a dimethylallyl group onto the adenine at position 37 in tRNAs that read codons beginning with uridine, leading to the formation of N6-(dimethylallyl)adenosine (i(6)A). This Limosilactobacillus fermentum (strain NBRC 3956 / LMG 18251) (Lactobacillus fermentum) protein is tRNA dimethylallyltransferase.